The following is a 38-amino-acid chain: Photosystem II reaction center protein L (38 aa).

Residues 17 to 37 (SLYWGLLLIFVLAVLFSSYIF) traverse the membrane as a helical segment.

It belongs to the PsbL family. In terms of assembly, PSII is composed of 1 copy each of membrane proteins PsbA, PsbB, PsbC, PsbD, PsbE, PsbF, PsbH, PsbI, PsbJ, PsbK, PsbL, PsbM, PsbT, PsbX, PsbY, PsbZ, Psb30/Ycf12, at least 3 peripheral proteins of the oxygen-evolving complex and a large number of cofactors. It forms dimeric complexes.

It is found in the plastid. It localises to the chloroplast thylakoid membrane. In terms of biological role, one of the components of the core complex of photosystem II (PSII). PSII is a light-driven water:plastoquinone oxidoreductase that uses light energy to abstract electrons from H(2)O, generating O(2) and a proton gradient subsequently used for ATP formation. It consists of a core antenna complex that captures photons, and an electron transfer chain that converts photonic excitation into a charge separation. This subunit is found at the monomer-monomer interface and is required for correct PSII assembly and/or dimerization. The polypeptide is Photosystem II reaction center protein L (Tetradesmus obliquus (Green alga)).